The sequence spans 422 residues: MVSYRDRLSQLPDDFLLQILSWLPTKDVLVTSLLSKRWRFLWTLVPRLNYDLRLHDNTCPRFSQFVDRSLLLHKAPTLESLNIKIGSICFTAEKDVGVWVRIGVDRFVRELSVSYCSGEEPIRLPKCLFTCSTLAVLKLENITLEDASCYVCFQSLKTLHLLDVKYLDDQSLPRIISSCSSLEDLVVQRCPGDNVKVVTVTAPSLKTLSLHKSSQAFEGDDDGFLIDTPKLKRVDIEDYWGGFCYIENMPEVVEANVDVIYKNTEKLLGSITSVKRLALCLITSDAAYPAGTIFSQLVHLELCTCAPRWWDLLTRLIEDSPKLRVLKLRQKHIRRAPSPRASWKQPALPKCLLFHLETFKWELYEGSQKQKEVATFILKHAIRLKTAIISPKPTSTLLEKHEMLKDLSSSPRGSSTCELLFD.

The region spanning 5–54 (RDRLSQLPDDFLLQILSWLPTKDVLVTSLLSKRWRFLWTLVPRLNYDLRL) is the F-box domain. LRR repeat units lie at residues 59–85 (CPRF…NIKI), 136–163 (VLKL…HLLD), 164–189 (VKYL…VVQR), 193–212 (DNVK…SLHK), 214–238 (SQAF…DIED), 279–304 (LCLI…ELCT), and 305–330 (CAPR…KLRQ). Positions 342–391 (SWKQPALPKCLLFHLETFKWELYEGSQKQKEVATFILKHAIRLKTAIISP) constitute an FBD domain.

This Arabidopsis thaliana (Mouse-ear cress) protein is F-box/FBD/LRR-repeat protein At5g56420.